Reading from the N-terminus, the 219-residue chain is Small ribosomal subunit protein uS3c (219 aa).

One can recognise a KH type-2 domain in the interval 39–109 (IRQYIEKNLS…QIRINVIEVK (71 aa)).

Belongs to the universal ribosomal protein uS3 family. As to quaternary structure, part of the 30S ribosomal subunit.

It localises to the plastid. The protein resides in the cyanelle. The sequence is that of Small ribosomal subunit protein uS3c (rps3) from Cyanophora paradoxa.